The primary structure comprises 286 residues: DegV domain-containing protein SPs1668 (286 aa).

In terms of domain architecture, DegV spans 3-282 (FTIMTDSTAD…PNTLAVFVIG (280 aa)). Thr62 and Ser94 together coordinate hexadecanoate.

May bind long-chain fatty acids, such as palmitate, and may play a role in lipid transport or fatty acid metabolism. The polypeptide is DegV domain-containing protein SPs1668 (Streptococcus pyogenes serotype M3 (strain SSI-1)).